Consider the following 208-residue polypeptide: dITP/XTP pyrophosphatase (208 aa).

Residue 11–16 participates in substrate binding; the sequence is SRNWKK. The active-site Proton acceptor is aspartate 76. Aspartate 76 serves as a coordination point for Mg(2+). Residues serine 77, 158–161, lysine 184, and 189–190 each bind substrate; these read FGYD and HR.

It belongs to the HAM1 NTPase family. Homodimer. It depends on Mg(2+) as a cofactor.

The catalysed reaction is XTP + H2O = XMP + diphosphate + H(+). It catalyses the reaction dITP + H2O = dIMP + diphosphate + H(+). The enzyme catalyses ITP + H2O = IMP + diphosphate + H(+). Pyrophosphatase that catalyzes the hydrolysis of nucleoside triphosphates to their monophosphate derivatives, with a high preference for the non-canonical purine nucleotides XTP (xanthosine triphosphate), dITP (deoxyinosine triphosphate) and ITP. Seems to function as a house-cleaning enzyme that removes non-canonical purine nucleotides from the nucleotide pool, thus preventing their incorporation into DNA/RNA and avoiding chromosomal lesions. The chain is dITP/XTP pyrophosphatase from Mycobacterium leprae (strain TN).